The primary structure comprises 177 residues: Protein C (177 aa).

Positions 1 to 10 are enriched in polar residues; it reads MSTKAWNASR. The disordered stretch occupies residues 1–38; sequence MSTKAWNASRLSGPDPSTPWSLRKPLQHGSRPPKGKRL.

It belongs to the morbillivirus protein C family.

This chain is Protein C (P/V/C), found in Rinderpest virus (strain RBOK) (RDV).